A 339-amino-acid polypeptide reads, in one-letter code: Fructose-1,6-bisphosphatase class 1 (339 aa).

Glu101, Asp120, Leu122, and Asp123 together coordinate Mg(2+). Substrate is bound by residues 123–126 (DGSS), Asn215, and Lys281. Glu287 contributes to the Mg(2+) binding site.

This sequence belongs to the FBPase class 1 family. As to quaternary structure, homotetramer. It depends on Mg(2+) as a cofactor.

The protein resides in the cytoplasm. The enzyme catalyses beta-D-fructose 1,6-bisphosphate + H2O = beta-D-fructose 6-phosphate + phosphate. It functions in the pathway carbohydrate biosynthesis; gluconeogenesis. This is Fructose-1,6-bisphosphatase class 1 from Polynucleobacter necessarius subsp. necessarius (strain STIR1).